The sequence spans 692 residues: Transcription factor steA (692 aa).

A DNA-binding region spans residues 56–165 (DQLIRRFLLP…SVPHDRLFLD (110 aa)). Disordered stretches follow at residues 406-507 (SPTY…EQSS) and 519-540 (LPAN…SDRY). Residues 470–482 (RSVNSTYTATLPQ) show a composition bias toward polar residues. C2H2-type zinc fingers lie at residues 564–588 (HSCP…VRTH) and 594–616 (YPCP…RRIH). Positions 618–665 (AQQDGQPLVHEDDLENDDNESVSHDEDESPSESVHPAVPGVHGMTSMP) are disordered. Residues 629-647 (DDLENDDNESVSHDEDESP) show a composition bias toward acidic residues.

The protein belongs to the STE12 transcription factor family.

It is found in the nucleus. In terms of biological role, transcription factor involved in sexual reproduction. Required for cleistothecial development and ascosporogenesis. Not required for asexual reproduction (conidiation). May act to repress medA expression. This chain is Transcription factor steA (steA), found in Emericella nidulans (strain FGSC A4 / ATCC 38163 / CBS 112.46 / NRRL 194 / M139) (Aspergillus nidulans).